A 139-amino-acid chain; its full sequence is D-ribose pyranase (139 aa).

The Proton donor role is filled by His20. Residues Asp28, His106, and 128 to 130 contribute to the substrate site; that span reads YAN.

This sequence belongs to the RbsD / FucU family. RbsD subfamily. Homodecamer.

It is found in the cytoplasm. It catalyses the reaction beta-D-ribopyranose = beta-D-ribofuranose. The protein operates within carbohydrate metabolism; D-ribose degradation; D-ribose 5-phosphate from beta-D-ribopyranose: step 1/2. In terms of biological role, catalyzes the interconversion of beta-pyran and beta-furan forms of D-ribose. The chain is D-ribose pyranase from Photobacterium profundum (strain SS9).